The primary structure comprises 275 residues: Formamidopyrimidine-DNA glycosylase (275 aa).

Pro2 serves as the catalytic Schiff-base intermediate with DNA. Residue Glu3 is the Proton donor of the active site. Residue Lys58 is the Proton donor; for beta-elimination activity of the active site. DNA-binding residues include His91 and Arg110. The FPG-type zinc finger occupies 238 to 272 (QVYGQTGKPCPRCGQAIVKLKVGGRGTHICPKCQK). Residue Arg262 is the Proton donor; for delta-elimination activity of the active site.

The protein belongs to the FPG family. As to quaternary structure, monomer. The cofactor is Zn(2+).

The catalysed reaction is Hydrolysis of DNA containing ring-opened 7-methylguanine residues, releasing 2,6-diamino-4-hydroxy-5-(N-methyl)formamidopyrimidine.. It carries out the reaction 2'-deoxyribonucleotide-(2'-deoxyribose 5'-phosphate)-2'-deoxyribonucleotide-DNA = a 3'-end 2'-deoxyribonucleotide-(2,3-dehydro-2,3-deoxyribose 5'-phosphate)-DNA + a 5'-end 5'-phospho-2'-deoxyribonucleoside-DNA + H(+). Involved in base excision repair of DNA damaged by oxidation or by mutagenic agents. Acts as a DNA glycosylase that recognizes and removes damaged bases. Has a preference for oxidized purines, such as 7,8-dihydro-8-oxoguanine (8-oxoG). Has AP (apurinic/apyrimidinic) lyase activity and introduces nicks in the DNA strand. Cleaves the DNA backbone by beta-delta elimination to generate a single-strand break at the site of the removed base with both 3'- and 5'-phosphates. The polypeptide is Formamidopyrimidine-DNA glycosylase (Streptococcus pyogenes serotype M28 (strain MGAS6180)).